The chain runs to 405 residues: Deoxyguanosinetriphosphate triphosphohydrolase-like protein (405 aa).

Positions Arg75–Asn219 constitute an HD domain.

This sequence belongs to the dGTPase family. Type 2 subfamily.

The sequence is that of Deoxyguanosinetriphosphate triphosphohydrolase-like protein from Rhizobium leguminosarum bv. trifolii (strain WSM2304).